A 232-amino-acid polypeptide reads, in one-letter code: Ion-translocating oxidoreductase complex subunit E (232 aa).

A run of 6 helical transmembrane segments spans residues 18–38 (GLVQ…ITNA), 39–59 (LGLG…VSLV), 69–89 (IPVF…LINA), 93–113 (GLYL…IIIG), 127–147 (AAFD…VLGA), and 182–202 (PFLL…LIAL).

Belongs to the NqrDE/RnfAE family. The complex is composed of six subunits: RnfA, RnfB, RnfC, RnfD, RnfE and RnfG.

It localises to the cell inner membrane. Its function is as follows. Part of a membrane-bound complex that couples electron transfer with translocation of ions across the membrane. This chain is Ion-translocating oxidoreductase complex subunit E, found in Shewanella baltica (strain OS185).